A 72-amino-acid chain; its full sequence is uncharacterized protein (72 aa).

The span at 1 to 38 (MSIFSSLSSLSTGSLKSSVSSIENGSSSGSFGSNETSG) shows a compositional bias: low complexity. The tract at residues 1–42 (MSIFSSLSSLSTGSLKSSVSSIENGSSSGSFGSNETSGWGQH) is disordered.

This is an uncharacterized protein from Dictyostelium discoideum (Social amoeba).